Reading from the N-terminus, the 63-residue chain is Sperm protamine P1 (63 aa).

The tract at residues 1–63 is disordered; it reads MARYRRHSRS…RYSRRGRRRY (63 aa).

This sequence belongs to the protamine P1 family. In terms of tissue distribution, testis.

Its subcellular location is the nucleus. It localises to the chromosome. Its function is as follows. Protamines substitute for histones in the chromatin of sperm during the haploid phase of spermatogenesis. They compact sperm DNA into a highly condensed, stable and inactive complex. The protein is Sperm protamine P1 (PRM1) of Phascogale tapoatafa (Common wambenger).